Consider the following 142-residue polypeptide: Protein KNATM (142 aa).

A coiled-coil region spans residues 4 to 36 (KKDENSILENMKQEINHSLKEEAQEEEEILKKR).

As to quaternary structure, interacts with KNAT1, KNAT3, KNAT4, BEL1, BLH2, BLH4 and BLH9, but not with BLH8 or the KNATM-A and KNATM-C isoforms. Isoforms KNATM-A and KNATM-C: no interactions with KNATM-B, KNOXX or BELL proteins. As to expression, detected in inflorescences, seedlings, leaves, hydathodes, stems, roots, embryo and siliques. Expressed in a polar pattern in organ primordia and at the boundary of mature organs. Detected in the lateral domains of flower meristems, but not in the inflorescence meristem or the vegetative shoot apical meristem.

Its subcellular location is the cytoplasm. It is found in the nucleus. Functionally, transcriptional regulator involved in leaf proximal/distal patterning. May act by sequestering BELL transcription factors. This Arabidopsis thaliana (Mouse-ear cress) protein is Protein KNATM.